The sequence spans 884 residues: MTSASSMSVSVECVNICNLTKGDGNARSDCSALSCAWKAPRALTGFLASTAHPPVCSVYSCGRNGRKSRMKACAWQRYEYEVGFSEAPYFVNVRNILKSRLSCGGHKRWELYCVSAESSSGASSDVTVETLWEDLFPSISYLPRKELEFVQKGLKLAFEAHHGQKRRSGEPFIIHPVAVARILGELELDWESIVAGLLHDTVEDTNFITFEKIEEEFGATVRHIVEGETKVSKLGKLKCKTESETIQDVKADDLRQMFLAMTDEVRVIIVKLADRLHNMRTLCHMPPHKQSSIAGETLQVFAPLAKLLGMYSIKSELENLSFMYVSAEDYDRVTSRIANLYKEHEKELTEANRILVKKIEDDQFLDLVTVNTDVRSVCKETYSIYKAALKSKGSINDYNQIAQQLRIVVKPKPSVGVGPLCSPQQICYHVLGLVHEIWKPIPRTVKDYIATPKPNGYQSLHTTVIPFLYESMFRLEVQIRTEEMDLIAERGIAVYYNGKSLSTGLVGNAVPLGRNSRGKTGCLNNADFALRVGWLNAIREWQEEFVGNMSSREFVDTITRDLLGSRVFVFTPKGEIKNLPKGATVVDYAYLIHTEIGNKMVAAKVNGNLVSPTHVLENAEVVEIVTYNALSSKSAFQRHKQWLQHAKTRSARHKIMRFLREQAAQCAAEITQDQVNDFVADSDSDVEDLTEDSRKSLQWWEKILVNVKQFQSQDKSRDTTPAPQNGSVWAPKVNGKHNKAIKNSSSDEPEFLLPGDGIARILPANIPAYKEVLPGLDSWRDSKIATWHHLEGQSIEWLCVVSMDRKGIIAEVTTVLAAEGIALCSCVAEIDRGRGLAVMLFQIEANIESLVSVCAKVDLVLGVLGWSSGCSWPRSTENAQVLEC.

The transit peptide at 1–55 (MTSASSMSVSVECVNICNLTKGDGNARSDCSALSCAWKAPRALTGFLASTAHPPV) directs the protein to the chloroplast. The HD domain maps to 172 to 279 (FIIHPVAVAR…VKLADRLHNM (108 aa)). Residues 563 to 626 (LGSRVFVFTP…ENAEVVEIVT (64 aa)) form the TGS domain. Residues 711–727 (QSQDKSRDTTPAPQNGS) are compositionally biased toward polar residues. The disordered stretch occupies residues 711 to 747 (QSQDKSRDTTPAPQNGSVWAPKVNGKHNKAIKNSSSD). The ACT domain occupies 797 to 868 (WLCVVSMDRK…LVLGVLGWSS (72 aa)).

This sequence belongs to the RelA/SpoT family. Interacts with RPP4. Interacts with RPP5. In terms of tissue distribution, expressed in hypocotyls, shoots, cotyledons, rosette leaves, sepals and pistils.

The protein resides in the plastid. Its subcellular location is the chloroplast. The catalysed reaction is GTP + ATP = guanosine 3'-diphosphate 5'-triphosphate + AMP. Functionally, may be involved in a rapid plant ppGpp (guanosine 3'-diphosphate 5'-diphosphate)-mediated response to pathogens and other stresses. Unable to functionally complement E.coli relA mutants. This chain is Putative GTP diphosphokinase RSH1, chloroplastic (RSH1), found in Arabidopsis thaliana (Mouse-ear cress).